A 145-amino-acid chain; its full sequence is Aspartate 1-decarboxylase (145 aa).

The Schiff-base intermediate with substrate; via pyruvic acid role is filled by Ser26. Position 26 is a pyruvic acid (Ser) (Ser26). Position 58 (Thr58) interacts with substrate. Tyr59 serves as the catalytic Proton donor. Position 74 to 76 (74 to 76 (GGA)) interacts with substrate.

This sequence belongs to the PanD family. Heterooctamer of four alpha and four beta subunits. Pyruvate is required as a cofactor. In terms of processing, is synthesized initially as an inactive proenzyme, which is activated by self-cleavage at a specific serine bond to produce a beta-subunit with a hydroxyl group at its C-terminus and an alpha-subunit with a pyruvoyl group at its N-terminus.

The protein localises to the cytoplasm. The enzyme catalyses L-aspartate + H(+) = beta-alanine + CO2. Its pathway is cofactor biosynthesis; (R)-pantothenate biosynthesis; beta-alanine from L-aspartate: step 1/1. Its function is as follows. Catalyzes the pyruvoyl-dependent decarboxylation of aspartate to produce beta-alanine. This is Aspartate 1-decarboxylase from Synechocystis sp. (strain ATCC 27184 / PCC 6803 / Kazusa).